The chain runs to 458 residues: Cysteine protease ATG4C (458 aa).

Position 1 is an N-acetylmethionine (methionine 1). Cysteine 111 serves as the catalytic Nucleophile. Residues aspartate 345 and histidine 347 contribute to the active site. The residue at position 451 (serine 451) is a Phosphoserine. At threonine 452 the chain carries Phosphothreonine.

The protein belongs to the peptidase C54 family.

The protein localises to the cytoplasm. The catalysed reaction is [protein]-C-terminal L-amino acid-glycyl-phosphatidylethanolamide + H2O = [protein]-C-terminal L-amino acid-glycine + a 1,2-diacyl-sn-glycero-3-phosphoethanolamine. With respect to regulation, inhibited by N-ethylmaleimide. Functionally, cysteine protease that plays a key role in autophagy by mediating both proteolytic activation and delipidation of ATG8 family proteins. The protease activity is required for proteolytic activation of ATG8 family proteins: cleaves the C-terminal amino acid of ATG8 proteins MAP1LC3 and GABARAPL2, to reveal a C-terminal glycine. Exposure of the glycine at the C-terminus is essential for ATG8 proteins conjugation to phosphatidylethanolamine (PE) and insertion to membranes, which is necessary for autophagy. In addition to the protease activity, also mediates delipidation of ATG8 family proteins. Catalyzes delipidation of PE-conjugated forms of ATG8 proteins during macroautophagy. Compared to ATG4B, the major protein for proteolytic activation of ATG8 proteins, shows weaker ability to cleave the C-terminal amino acid of ATG8 proteins, while it displays stronger delipidation activity. In contrast to other members of the family, weakly or not involved in phagophore growth during mitophagy. In Mus musculus (Mouse), this protein is Cysteine protease ATG4C.